Consider the following 252-residue polypeptide: Phosphonates import ATP-binding protein PhnC 1 (252 aa).

In terms of domain architecture, ABC transporter spans isoleucine 2–serine 244. Glycine 35–serine 42 contacts ATP.

It belongs to the ABC transporter superfamily. Phosphonates importer (TC 3.A.1.9.1) family. The complex is composed of two ATP-binding proteins (PhnC), two transmembrane proteins (PhnE) and a solute-binding protein (PhnD).

The protein resides in the cell inner membrane. It carries out the reaction phosphonate(out) + ATP + H2O = phosphonate(in) + ADP + phosphate + H(+). In terms of biological role, part of the ABC transporter complex PhnCDE involved in phosphonates import. Responsible for energy coupling to the transport system. This is Phosphonates import ATP-binding protein PhnC 1 from Trichodesmium erythraeum (strain IMS101).